We begin with the raw amino-acid sequence, 346 residues long: MQPIRYRTDLTPYNTFGLRAQARAFIALEHADELRDIVRLLEFDRDTVLWLGGGSNILLMQDYAGLVVHMENKGIREIARSDGMVLIEAQAGEIWHDFVLHTVALGLSGLENLSLIPGTVGASPVQNIGAYGVEAKDVIHSVRCFDLDTETFVELANADCRFAYRESLFKQEGKGRYVIVSVVFALKTHFVPTLGYGDLAAAVAELSAGRVPTAKDVSDAVCAIRNSKLPNPNVLGNVGSFFKNPVVSAEKAATLLQRHPDMPRYPQPDGSVKLAAGWLIDQCRLKGFQIGGAAVHDRQALVLVNKNNASANDVRQLAQHIKFTVFARFQVELHAEPNWLPASFSL.

The FAD-binding PCMH-type domain maps to 18 to 189 (LRAQARAFIA…VSVVFALKTH (172 aa)). Residue Arg165 is part of the active site. Ser240 acts as the Proton donor in catalysis. Glu336 is an active-site residue.

Belongs to the MurB family. FAD is required as a cofactor.

It is found in the cytoplasm. It carries out the reaction UDP-N-acetyl-alpha-D-muramate + NADP(+) = UDP-N-acetyl-3-O-(1-carboxyvinyl)-alpha-D-glucosamine + NADPH + H(+). Its pathway is cell wall biogenesis; peptidoglycan biosynthesis. In terms of biological role, cell wall formation. The chain is UDP-N-acetylenolpyruvoylglucosamine reductase from Neisseria meningitidis serogroup B (strain ATCC BAA-335 / MC58).